The chain runs to 549 residues: Putative acyl-CoA synthetase YngI (549 aa).

Residues 198–206 (TSGTTGFPK), Asp423, Arg438, and Lys529 each bind ATP.

This sequence belongs to the ATP-dependent AMP-binding enzyme family.

This chain is Putative acyl-CoA synthetase YngI (yngI), found in Bacillus subtilis (strain 168).